We begin with the raw amino-acid sequence, 86 residues long: Large ribosomal subunit protein bL31 (86 aa).

The disordered stretch occupies residues 64 to 86 (KYGMGSANSSESKDQKEEKDSKK). Basic and acidic residues predominate over residues 74–86 (ESKDQKEEKDSKK).

The protein belongs to the bacterial ribosomal protein bL31 family. Type A subfamily. In terms of assembly, part of the 50S ribosomal subunit.

Binds the 23S rRNA. The polypeptide is Large ribosomal subunit protein bL31 (Prochlorococcus marinus (strain MIT 9301)).